The sequence spans 442 residues: Cation channel sperm-associated protein 4 (442 aa).

Residues 1–66 (MSEKHKWWQQ…TQMYIKQLLR (66 aa)) lie on the Cytoplasmic side of the membrane. A helical transmembrane segment spans residues 67–88 (HPAFQLLLAFLLLSNAITIALR). Over 89–98 (TNSYLGQKHY) the chain is Extracellular. A helical transmembrane segment spans residues 99 to 125 (ELFSTIDDIVLTILICEVLLGWLNGFW). At 126–129 (IFWK) the chain is on the cytoplasmic side. Residues 130-153 (DGWNILNFAIVFILFMGFFIKQLD) traverse the membrane as a helical segment. Over 154 to 156 (MVA) the chain is Extracellular. Residues 157-175 (ITYPLRVLRLVHVCMAVEP) traverse the membrane as a helical segment. Residues 176 to 188 (LARIIKVILQSMP) lie on the Cytoplasmic side of the membrane. The helical transmembrane segment at 189-212 (DLANVMALILFFMLVFSVFGVTLF) threads the bilayer. Topologically, residues 213-222 (GAFVPKHFQN) are extracellular. An intramembrane region (helical; Pore-forming) is located at residues 223–234 (MGVALYTLFICI). The Extracellular portion of the chain corresponds to 235–255 (TQDGWLDIYTDFQMDEREYAM). Residues 256-283 (EVGGAIYFAVFITLGAFIGLNLFVVVVT) form a helical membrane-spanning segment. The Cytoplasmic portion of the chain corresponds to 284–442 (TNLEQMMKTG…NMVNKHKFSH (159 aa)).

The protein belongs to the cation channel sperm-associated (TC 1.A.1.19) family. In terms of assembly, component of the CatSper complex or CatSpermasome composed of the core pore-forming members CATSPER1, CATSPER2, CATSPER3 and CATSPER4 as well as auxiliary members CATSPERB, CATSPERG2, CATSPERD, CATSPERE, CATSPERZ, C2CD6/CATSPERT, SLCO6C1, TMEM249, TMEM262 and EFCAB9. HSPA1 may be an additional auxiliary complex member. The core complex members CATSPER1, CATSPER2, CATSPER3 and CATSPER4 form a heterotetrameric channel. The auxiliary CATSPERB, CATSPERG2, CATSPERD and CATSPERE subunits form a pavilion-like structure over the pore which stabilizes the complex through interactions with CATSPER4, CATSPER3, CATSPER1 and CATSPER2 respectively. SLCO6C1 interacts with CATSPERE and TMEM262/CATSPERH interacts with CATSPERB, further stabilizing the complex. C2CD6/CATSPERT interacts at least with CATSPERD and is required for targeting the CatSper complex in the flagellar membrane. In terms of tissue distribution, testis-specific.

It is found in the cell projection. It localises to the cilium. The protein localises to the flagellum membrane. It catalyses the reaction Ca(2+)(in) = Ca(2+)(out). In contrast to the human ortholog, not activated by progesterone. Activated by intracellular alkalinization. Functionally, pore-forming subunit of the CatSper complex, a sperm-specific voltage-gated calcium channel that plays a central role in sperm cell hyperactivation. Controls calcium entry to mediate the hyperactivated motility, a step needed for sperm motility which is essential late in the preparation of sperm for fertilization. The chain is Cation channel sperm-associated protein 4 (Catsper4) from Mus musculus (Mouse).